Reading from the N-terminus, the 388-residue chain is Small ribosomal subunit protein uS3m (388 aa).

It belongs to the universal ribosomal protein uS3 family.

Its subcellular location is the mitochondrion. Essential for mitochondrial protein synthesis and required for the maturation of small ribosomal subunits. This Kluyveromyces lactis (strain ATCC 8585 / CBS 2359 / DSM 70799 / NBRC 1267 / NRRL Y-1140 / WM37) (Yeast) protein is Small ribosomal subunit protein uS3m (VAR1).